The following is an 825-amino-acid chain: PR domain zinc finger protein 1 (825 aa).

The SET domain occupies 84–201 (PRNLLFKYAT…ANQELLVWYC (118 aa)). Positions 324–361 (ITRSPIPSSTTPSPSARSSPDQSLKSSSPHSSPGNTVS) are enriched in low complexity. Residues 324–369 (ITRSPIPSSTTPSPSARSSPDQSLKSSSPHSSPGNTVSPVGPGSQE) are disordered. The interval 527-574 (HVVQPKATSAAMAAPSSDEAMNLIKNKRNMTGYKTLPYPLKKQNGKIK) is interaction with PIAS1. 4 consecutive C2H2-type zinc fingers follow at residues 575–597 (YECN…LRVH), 603–625 (FKCQ…YLVH), 631–653 (HECQ…LRLH), and 659–681 (YQCK…KRLH). Lys-816 is covalently cross-linked (Glycyl lysine isopeptide (Lys-Gly) (interchain with G-Cter in SUMO1); alternate). Lys-816 is covalently cross-linked (Glycyl lysine isopeptide (Lys-Gly) (interchain with G-Cter in SUMO2); alternate).

It belongs to the class V-like SAM-binding methyltransferase superfamily. Interacts with PRMT5. Interacts with FBXO10. Interacts with FBXO11. Interacts with multiple nuclear sumoylation E3 ligases, including CBX4, PIAS1, PIAS2, PIAS3, PIAS4, PML and RNF4, but not RANBP2. Interacts with LDB1, SMARCD3 and SMARCC1. Interacts with EEIG1; following TNFSF11/RANKL stimulation in bone marrow-derived macrophages, the interaction promotes the binding of PRDM1/BLIMP1 to the gene promoter of IRF8. In terms of processing, sumoylation at Lys-816 by PIAS1 augments transcriptional repressor activity, and is critical for plasma cell differentiation. Can be sumoylated with SUMO1 and SUMO2 by PML. Degradation of the wild-type protein mostly depends upon sumoylation, rather than ubiquitination. Desumoylated by SENP1 and SENP6. Ubiquitinated by the SCF(FBXO11) complex, leading to its degradation by the proteasome.

The protein resides in the nucleus. Its subcellular location is the cytoplasm. In terms of biological role, transcription factor that mediates a transcriptional program in various innate and adaptive immune tissue-resident lymphocyte T cell types such as tissue-resident memory T (Trm), natural killer (trNK) and natural killer T (NKT) cells and negatively regulates gene expression of proteins that promote the egress of tissue-resident T-cell populations from non-lymphoid organs. Plays a role in the development, retention and long-term establishment of adaptive and innate tissue-resident lymphocyte T cell types in non-lymphoid organs, such as the skin and gut, but also in other nonbarrier tissues like liver and kidney, and therefore may provide immediate immunological protection against reactivating infections or viral reinfection. Binds specifically to the PRDI element in the promoter of the beta-interferon gene. Drives the maturation of B-lymphocytes into Ig secreting cells. Associates with the transcriptional repressor ZNF683 to chromatin at gene promoter regions. Binds to the promoter and acts as a transcriptional repressor of IRF8, thereby promotes transcription of osteoclast differentiation factors such as NFATC1 and EEIG1. This Homo sapiens (Human) protein is PR domain zinc finger protein 1 (PRDM1).